Consider the following 294-residue polypeptide: tRNA dimethylallyltransferase (294 aa).

10 to 17 (GPTAVGKT) contributes to the ATP binding site. Substrate is bound at residue 12–17 (TAVGKT). Residues 35–38 (DSQQ) form an interaction with substrate tRNA region.

This sequence belongs to the IPP transferase family. As to quaternary structure, monomer. Mg(2+) serves as cofactor.

It carries out the reaction adenosine(37) in tRNA + dimethylallyl diphosphate = N(6)-dimethylallyladenosine(37) in tRNA + diphosphate. Its function is as follows. Catalyzes the transfer of a dimethylallyl group onto the adenine at position 37 in tRNAs that read codons beginning with uridine, leading to the formation of N6-(dimethylallyl)adenosine (i(6)A). The chain is tRNA dimethylallyltransferase from Streptococcus pneumoniae (strain Taiwan19F-14).